Consider the following 449-residue polypeptide: Histone PARylation factor 1-like (449 aa).

Residues 3–28 form a CCHC-type zinc finger; that stretch reads KEDCKYWDKCYQQNPAHLSKYNHPKK. Residues 18 to 93 form a disordered region; that stretch reads AHLSKYNHPK…AKGSYEAETE (76 aa). Basic and acidic residues-rich tracts occupy residues 28–41 and 54–69; these read KQQE…EGKK and EQKK…KDKS. Ser72 is modified (phosphoserine). Glu384 functions as the Proton donor in the catalytic mechanism.

The protein belongs to the HPF1 family.

The protein localises to the chromosome. It is found in the nucleus. Cofactor for serine ADP-ribosylation that confers serine specificity on Parp. Switches the amino acid specificity of Parp from aspartate or glutamate to serine residues. Acts by completing the active site of Parp: forms a composite active site composed of residues from HPF1/CG1218 and Parp. The chain is Histone PARylation factor 1-like from Drosophila melanogaster (Fruit fly).